The following is a 199-amino-acid chain: uncharacterized protein (199 aa).

A run of 3 helical transmembrane segments spans residues 22 to 44 (VVVVGLYYGFLTTFSIGPSYLFL), 65 to 87 (TGFIAGQLMMFISIYYAPLHLAL), and 91 to 108 (HTITVLALPYLLFHFFFW).

This sequence belongs to the ycf1 family.

Its subcellular location is the mitochondrion membrane. This is an uncharacterized protein from Arabidopsis thaliana (Mouse-ear cress).